The following is a 161-amino-acid chain: MSVKGKVFKYGDNVDTDVIIPARYLNTSDANELAAHCMEDIDVDFVKNVKSGDIIVANKNFGCGSSREHAPLAIKTAGVSCVIASTFARIFYRNAINIGLPILECDEAVKNIDAGDELEVDFSTGLIKNLTKSQEYQGEAFPEFMQKIIDNDGLIGYIRNR.

It belongs to the LeuD family. LeuD type 2 subfamily. As to quaternary structure, heterodimer of LeuC and LeuD.

It carries out the reaction (2R,3S)-3-isopropylmalate = (2S)-2-isopropylmalate. It participates in amino-acid biosynthesis; L-leucine biosynthesis; L-leucine from 3-methyl-2-oxobutanoate: step 2/4. Catalyzes the isomerization between 2-isopropylmalate and 3-isopropylmalate, via the formation of 2-isopropylmaleate. The polypeptide is 3-isopropylmalate dehydratase small subunit (Clostridium beijerinckii (strain ATCC 51743 / NCIMB 8052) (Clostridium acetobutylicum)).